A 241-amino-acid chain; its full sequence is Proteasome subunit alpha type-5 (241 aa).

Residue M1 is modified to N-acetylmethionine. Phosphoserine is present on S16. T55 carries the phosphothreonine modification. 2 positions are modified to phosphoserine: S56 and S63. S198 carries O-linked (GlcNAc) serine glycosylation.

The protein belongs to the peptidase T1A family. As to quaternary structure, the 26S proteasome consists of a 20S proteasome core and two 19S regulatory subunits. The 20S proteasome core is a barrel-shaped complex made of 28 subunits that are arranged in four stacked rings. The two outer rings are each formed by seven alpha subunits, and the two inner rings are formed by seven beta subunits. The proteolytic activity is exerted by three beta-subunits PSMB5, PSMB6 and PSMB7. PSMA5 interacts directly with the PSMG1-PSMG2 heterodimer which promotes 20S proteasome assembly.

The protein localises to the cytoplasm. It localises to the nucleus. Its function is as follows. Component of the 20S core proteasome complex involved in the proteolytic degradation of most intracellular proteins. This complex plays numerous essential roles within the cell by associating with different regulatory particles. Associated with two 19S regulatory particles, forms the 26S proteasome and thus participates in the ATP-dependent degradation of ubiquitinated proteins. The 26S proteasome plays a key role in the maintenance of protein homeostasis by removing misfolded or damaged proteins that could impair cellular functions, and by removing proteins whose functions are no longer required. Associated with the PA200 or PA28, the 20S proteasome mediates ubiquitin-independent protein degradation. This type of proteolysis is required in several pathways including spermatogenesis (20S-PA200 complex) or generation of a subset of MHC class I-presented antigenic peptides (20S-PA28 complex). The protein is Proteasome subunit alpha type-5 (PSMA5) of Bos taurus (Bovine).